The following is a 496-amino-acid chain: Probable ATP-dependent DNA helicase RecS (496 aa).

The Helicase ATP-binding domain occupies 25–192; it reads IESILSGKDT…MNLLELQHAV (168 aa). 38 to 45 is an ATP binding site; that stretch reads LPTGGGKS. The DEAH box signature appears at 136–139; that stretch reads DEAH. A Helicase C-terminal domain is found at 219 to 363; it reads RVIQLVENLQ…EIADVIRVLE (145 aa).

Belongs to the helicase family. RecQ subfamily. As to quaternary structure, interacts with SSB (ssbA) and YpbB.

It is found in the cytoplasm. Its subcellular location is the nucleoid. The enzyme catalyses Couples ATP hydrolysis with the unwinding of duplex DNA by translocating in the 3'-5' direction.. It carries out the reaction ATP + H2O = ADP + phosphate + H(+). In terms of biological role, probable 3'-5' DNA helicase. Required in synaptic and/or post-synaptic stages of recombination. Probably has an overlapping function with RecQ. It probably acts to help generate ss-DNA from ds-DNA breaks. This Bacillus subtilis (strain 168) protein is Probable ATP-dependent DNA helicase RecS.